The chain runs to 171 residues: Putative F-box protein At1g32020 (171 aa).

In terms of domain architecture, F-box spans 3-49; sequence CDRISTLPDHLVAKIVSYLGIKDSIKTSVLSKRWEFVWLKVVGLDLK.

This chain is Putative F-box protein At1g32020, found in Arabidopsis thaliana (Mouse-ear cress).